A 63-amino-acid chain; its full sequence is Muscarinic toxin 2 (63 aa).

Intrachain disulfides connect cysteine 3-cysteine 22, cysteine 17-cysteine 42, cysteine 44-cysteine 55, and cysteine 56-cysteine 61.

It belongs to the three-finger toxin family. Short-chain subfamily. Type B muscarinic toxin sub-subfamily. In terms of assembly, monomer. Expressed by the venom gland.

The protein localises to the secreted. In terms of biological role, blocks M2 muscarinic acetylcholine receptors (CHRM2). Fully blocks the binding of N-methylscopolamine (NMS) and oxotremorine-M to M2 receptors, slightly increased NMS binding to M1 receptors. The protein is Muscarinic toxin 2 of Dendroaspis angusticeps (Eastern green mamba).